A 101-amino-acid chain; its full sequence is Small ribosomal subunit protein uS14 (101 aa).

This sequence belongs to the universal ribosomal protein uS14 family. In terms of assembly, part of the 30S ribosomal subunit. Contacts proteins S3 and S10.

In terms of biological role, binds 16S rRNA, required for the assembly of 30S particles and may also be responsible for determining the conformation of the 16S rRNA at the A site. The polypeptide is Small ribosomal subunit protein uS14 (Janthinobacterium sp. (strain Marseille) (Minibacterium massiliensis)).